A 264-amino-acid polypeptide reads, in one-letter code: Thymidylate synthase (264 aa).

Arg21 lines the dUMP pocket. His51 lines the (6R)-5,10-methylene-5,6,7,8-tetrahydrofolate pocket. 126–127 contacts dUMP; sequence RR. Cys146 serves as the catalytic Nucleophile. DUMP-binding positions include 166-169, Asn177, and 207-209; these read RSGD and HIY. Residue Asp169 coordinates (6R)-5,10-methylene-5,6,7,8-tetrahydrofolate. (6R)-5,10-methylene-5,6,7,8-tetrahydrofolate is bound at residue Ala263.

The protein belongs to the thymidylate synthase family. Bacterial-type ThyA subfamily. In terms of assembly, homodimer.

The protein localises to the cytoplasm. The catalysed reaction is dUMP + (6R)-5,10-methylene-5,6,7,8-tetrahydrofolate = 7,8-dihydrofolate + dTMP. It functions in the pathway pyrimidine metabolism; dTTP biosynthesis. Catalyzes the reductive methylation of 2'-deoxyuridine-5'-monophosphate (dUMP) to 2'-deoxythymidine-5'-monophosphate (dTMP) while utilizing 5,10-methylenetetrahydrofolate (mTHF) as the methyl donor and reductant in the reaction, yielding dihydrofolate (DHF) as a by-product. This enzymatic reaction provides an intracellular de novo source of dTMP, an essential precursor for DNA biosynthesis. This Sinorhizobium medicae (strain WSM419) (Ensifer medicae) protein is Thymidylate synthase.